Here is a 273-residue protein sequence, read N- to C-terminus: Oligodendrocyte transcription factor 3 (273 aa).

The segment covering 1 to 14 has biased composition (low complexity); that stretch reads MNSDSSSVSSRASS. Residues 1–72 are disordered; sequence MNSDSSSVSS…KAAGESSKYK (72 aa). The span at 24-34 shows a compositional bias: basic residues; the sequence is DHHHRHHHHHQ. Polar residues predominate over residues 37–47; the sequence is RLNSVSSTQGD. Positions 69–90 form a coiled coil; it reads SKYKIKKQLSEQDLQQLRLKIN. One can recognise a bHLH domain in the interval 84–138; it reads QLRLKINGRERKRMHDLNLAMDGLREVMPYAHGPSVRKLSKIATLLLARNYILML.

In terms of tissue distribution, weakly expressed, mainly in non-neural tissues.

It is found in the nucleus. May determine the distinct specification program of class A neurons in the dorsal part of the spinal cord and suppress specification of class B neurons. This chain is Oligodendrocyte transcription factor 3 (Olig3), found in Mus musculus (Mouse).